A 438-amino-acid chain; its full sequence is Probable 26S proteasome regulatory subunit rpn-6.1 (438 aa).

The segment covering 1 to 10 (MRETSSREDT) has biased composition (basic and acidic residues). The interval 1–30 (MRETSSREDTNNIGKAPEMSGGTIMDTMTS) is disordered. One can recognise a PCI domain in the interval 239-408 (DFKTAFSYFY…GMLIVFEIAV (170 aa)).

Belongs to the proteasome subunit S9 family. Component of the lid subcomplex of the 19S proteasome regulatory particle complex (also named PA700 complex). The 26S proteasome consists of a 20S proteasome core and two 19S regulatory subunits.

In terms of biological role, component of the lid subcomplex of the 26S proteasome, a multiprotein complex involved in the ATP-dependent degradation of ubiquitinated proteins. In the complex, rpn-6.1 is required for proteasome assembly. Plays a key role in increased proteasome activity in response to proteotoxic stress: induced by daf-16, promoting enhanced assembly of the 26S proteasome and higher proteasome activity, leading to extended lifespan. This is Probable 26S proteasome regulatory subunit rpn-6.1 from Caenorhabditis elegans.